The chain runs to 63 residues: Probable rubredoxin (63 aa).

A Rubredoxin-like domain is found at 11-62 (MKRYKCRVCGYIYDPEKGEPRTDTPPGTPFEDLPETWRCPSCGAKKKMFKPL). Fe cation-binding residues include Cys-16, Cys-19, Cys-49, and Cys-52.

This sequence belongs to the rubredoxin family. Requires Fe(3+) as cofactor.

Functionally, rubredoxin is a small nonheme, iron protein lacking acid-labile sulfide. Its single Fe, chelated to 4 Cys, functions as an electron acceptor and may also stabilize the conformation of the molecule. This chain is Probable rubredoxin, found in Methanothermobacter thermautotrophicus (strain ATCC 29096 / DSM 1053 / JCM 10044 / NBRC 100330 / Delta H) (Methanobacterium thermoautotrophicum).